The chain runs to 193 residues: NADH-quinone oxidoreductase subunit B (193 aa).

The tract at residues 1–25 is disordered; the sequence is MGLNDSSGTLVAPKPKGIIDPNTGR. Cysteine 72, cysteine 73, cysteine 137, and cysteine 167 together coordinate [4Fe-4S] cluster.

This sequence belongs to the complex I 20 kDa subunit family. As to quaternary structure, NDH-1 is composed of 14 different subunits. Subunits NuoB, C, D, E, F, and G constitute the peripheral sector of the complex. It depends on [4Fe-4S] cluster as a cofactor.

The protein resides in the cell inner membrane. It carries out the reaction a quinone + NADH + 5 H(+)(in) = a quinol + NAD(+) + 4 H(+)(out). NDH-1 shuttles electrons from NADH, via FMN and iron-sulfur (Fe-S) centers, to quinones in the respiratory chain. Couples the redox reaction to proton translocation (for every two electrons transferred, four hydrogen ions are translocated across the cytoplasmic membrane), and thus conserves the redox energy in a proton gradient. This chain is NADH-quinone oxidoreductase subunit B, found in Mesorhizobium japonicum (strain LMG 29417 / CECT 9101 / MAFF 303099) (Mesorhizobium loti (strain MAFF 303099)).